We begin with the raw amino-acid sequence, 204 residues long: Large ribosomal subunit protein uL4 (204 aa).

The segment at 44-76 (KRQGTQSAKTRSEVRGGGIKPWRQKGTGRARQG) is disordered.

This sequence belongs to the universal ribosomal protein uL4 family. Part of the 50S ribosomal subunit.

Its function is as follows. One of the primary rRNA binding proteins, this protein initially binds near the 5'-end of the 23S rRNA. It is important during the early stages of 50S assembly. It makes multiple contacts with different domains of the 23S rRNA in the assembled 50S subunit and ribosome. Forms part of the polypeptide exit tunnel. The chain is Large ribosomal subunit protein uL4 from Clostridium perfringens (strain 13 / Type A).